The primary structure comprises 315 residues: 3-oxoacyl-[acyl-carrier-protein] reductase 3, chloroplastic (315 aa).

The N-terminal 55 residues, methionine 1–glutamine 55, are a transit peptide targeting the chloroplast. Valine 77–valine 101 serves as a coordination point for NADP(+). Serine 209 is a substrate binding site. Catalysis depends on tyrosine 222, which acts as the Proton acceptor.

It belongs to the short-chain dehydrogenases/reductases (SDR) family. Homotetramer.

It localises to the plastid. It is found in the chloroplast. The enzyme catalyses a (3R)-hydroxyacyl-[ACP] + NADP(+) = a 3-oxoacyl-[ACP] + NADPH + H(+). It functions in the pathway lipid metabolism; fatty acid biosynthesis. This chain is 3-oxoacyl-[acyl-carrier-protein] reductase 3, chloroplastic (bkr3), found in Brassica napus (Rape).